Consider the following 185-residue polypeptide: Ribosome-recycling factor (185 aa).

The protein belongs to the RRF family.

The protein resides in the cytoplasm. Responsible for the release of ribosomes from messenger RNA at the termination of protein biosynthesis. May increase the efficiency of translation by recycling ribosomes from one round of translation to another. In Helicobacter hepaticus (strain ATCC 51449 / 3B1), this protein is Ribosome-recycling factor.